A 241-amino-acid chain; its full sequence is Beta-casein (241 aa).

Positions 1 to 15 (MKILILACLVALALA) are cleaved as a signal peptide. A disordered region spans residues 21–45 (LNVSSETVESLSSNEPDSSSEESIT). The residue at position 24 (Ser-24) is a Phosphoserine; in form 4-P, form 5-P, form 6-P and form 7-P. Ser-25 carries the phosphoserine; in form 7-P modification. At Thr-27 the chain carries Phosphothreonine; in form 6-P and form 7-P. Ser-30 and Ser-32 each carry phosphoserine. A Phosphoserine; in form 5-P, form 6-P and form 7-P modification is found at Ser-33. Phosphoserine; in form 4-P, form 5-P, form 6-P and form 7-P is present on residues Ser-38, Ser-39, and Ser-40. Asn-150 bears the Deamidated asparagine mark.

It belongs to the beta-casein family. Post-translationally, there are at least five different forms found in milk, with varying degrees of phosphorylation. These include form 3-P which is phosphorylated at three sites that have not been determined, this form is present in very low amounts, form 4-P which is phosphorylated at four sites, form 5-P which is phosphorylated at five sites, form 6-P which is phosphorylated at six sites, and form 7-P which is phosphorylated at seven sites. In terms of processing, spontaneous deamidation of Asn-150 produces aspartate or isoaspartate. As to expression, mammary gland specific. Secreted in milk.

It is found in the secreted. Its function is as follows. Important role in determination of the surface properties of the casein micelles. This is Beta-casein from Equus caballus (Horse).